The chain runs to 518 residues: Ethanolamine kinase (518 aa).

Polar residues predominate over residues 1–19 (MGTETKSNSYTGQISTSGG). The tract at residues 1–88 (MGTETKSNSY…DIRAKPEDKS (88 aa)) is disordered. Residues 33–68 (QTVNQQTLSLSQSNQVQNQLNSHSNSNSYPNPSGSE) show a composition bias toward low complexity. Basic and acidic residues predominate over residues 69–88 (NKNENEQNSRDIRAKPEDKS). Phosphoserine occurs at positions 190 and 194.

This sequence belongs to the choline/ethanolamine kinase family.

It is found in the cytoplasm. The enzyme catalyses ethanolamine + ATP = phosphoethanolamine + ADP + H(+). It functions in the pathway phospholipid metabolism; phosphatidylethanolamine biosynthesis; phosphatidylethanolamine from ethanolamine: step 1/3. Highly specific for ethanolamine phosphorylation. May be a rate-controlling step in phosphatidylethanolamine biosynthesis. In Drosophila melanogaster (Fruit fly), this protein is Ethanolamine kinase (eas).